A 373-amino-acid polypeptide reads, in one-letter code: 3 beta-hydroxysteroid dehydrogenase/Delta 5--&gt;4-isomerase (373 aa).

Y155 serves as the catalytic Proton acceptor. Position 159 (K159) interacts with NAD(+). A helical membrane pass occupies residues 288-308 (ISLEYWLAFLLEIVSFLLSPI).

Belongs to the 3-beta-HSD family.

The protein localises to the endoplasmic reticulum membrane. Its subcellular location is the mitochondrion membrane. It catalyses the reaction a 3beta-hydroxy-Delta(5)-steroid + NAD(+) = a 3-oxo-Delta(5)-steroid + NADH + H(+). The enzyme catalyses a 3-oxo-Delta(5)-steroid = a 3-oxo-Delta(4)-steroid. Its pathway is lipid metabolism; steroid biosynthesis. 3-beta-HSD is a bifunctional enzyme, that catalyzes the oxidative conversion of Delta(5)-ene-3-beta-hydroxy steroid, and the oxidative conversion of ketosteroids. The 3-beta-HSD enzymatic system plays a crucial role in the biosynthesis of all classes of hormonal steroids. In Canis lupus familiaris (Dog), this protein is 3 beta-hydroxysteroid dehydrogenase/Delta 5--&gt;4-isomerase (HSD3B).